The sequence spans 204 residues: High frequency lysogenization protein HflD homolog (204 aa).

This sequence belongs to the HflD family.

It localises to the cytoplasm. It is found in the cell inner membrane. This Ruthia magnifica subsp. Calyptogena magnifica protein is High frequency lysogenization protein HflD homolog.